A 357-amino-acid chain; its full sequence is Probable RNA methyltransferase Daro_1157 (357 aa).

Catalysis depends on Glu91, which acts as the Proton acceptor. The 227-residue stretch at 94 to 320 folds into the Radical SAM core domain; the sequence is LLPRDGLCIS…TTVRNSAGQD (227 aa). An intrachain disulfide couples Cys101 to Cys325. [4Fe-4S] cluster is bound by residues Cys108, Cys112, and Cys115. Residues 153–154, Ser183, 206–208, and Asn282 contribute to the S-adenosyl-L-methionine site; these read GE and SLH. Cys325 acts as the S-methylcysteine intermediate in catalysis.

It belongs to the radical SAM superfamily. RlmN family. It depends on [4Fe-4S] cluster as a cofactor.

The protein resides in the cytoplasm. The chain is Probable RNA methyltransferase Daro_1157 from Dechloromonas aromatica (strain RCB).